The sequence spans 629 residues: Chaperone protein HtpG (629 aa).

The interval 1-337 is a; substrate-binding; that stretch reads MAASKETMQF…SSDLPLNVSR (337 aa). Residues 338-554 form a b region; that stretch reads EILQGNRVID…ERDMALYMQQ (217 aa). The tract at residues 555 to 629 is c; it reads LLKQAGHEIS…INQLMLALAG (75 aa).

This sequence belongs to the heat shock protein 90 family. As to quaternary structure, homodimer.

The protein localises to the cytoplasm. Molecular chaperone. Has ATPase activity. In Acidithiobacillus ferrooxidans (strain ATCC 23270 / DSM 14882 / CIP 104768 / NCIMB 8455) (Ferrobacillus ferrooxidans (strain ATCC 23270)), this protein is Chaperone protein HtpG.